We begin with the raw amino-acid sequence, 251 residues long: Triosephosphate isomerase (251 aa).

A substrate-binding site is contributed by 9 to 11; the sequence is NWK. Residue His-95 is the Electrophile of the active site. The Proton acceptor role is filled by Glu-167. Substrate contacts are provided by residues Gly-173, Ser-213, and 234 to 235; that span reads GG. Position 213 is a phosphoserine (Ser-213).

Belongs to the triosephosphate isomerase family. Homodimer.

Its subcellular location is the cytoplasm. The catalysed reaction is D-glyceraldehyde 3-phosphate = dihydroxyacetone phosphate. It participates in carbohydrate biosynthesis; gluconeogenesis. Its pathway is carbohydrate degradation; glycolysis; D-glyceraldehyde 3-phosphate from glycerone phosphate: step 1/1. Its function is as follows. Involved in the gluconeogenesis. Catalyzes stereospecifically the conversion of dihydroxyacetone phosphate (DHAP) to D-glyceraldehyde-3-phosphate (G3P). This is Triosephosphate isomerase from Bacillus cereus (strain B4264).